Consider the following 185-residue polypeptide: Peptidyl-tRNA hydrolase (185 aa).

Tyrosine 14 is a binding site for tRNA. The active-site Proton acceptor is the histidine 19. Tyrosine 64, asparagine 66, and asparagine 112 together coordinate tRNA.

It belongs to the PTH family. In terms of assembly, monomer.

It is found in the cytoplasm. It carries out the reaction an N-acyl-L-alpha-aminoacyl-tRNA + H2O = an N-acyl-L-amino acid + a tRNA + H(+). Its function is as follows. Hydrolyzes ribosome-free peptidyl-tRNAs (with 1 or more amino acids incorporated), which drop off the ribosome during protein synthesis, or as a result of ribosome stalling. In terms of biological role, catalyzes the release of premature peptidyl moieties from peptidyl-tRNA molecules trapped in stalled 50S ribosomal subunits, and thus maintains levels of free tRNAs and 50S ribosomes. This is Peptidyl-tRNA hydrolase from Ligilactobacillus salivarius (strain UCC118) (Lactobacillus salivarius).